The primary structure comprises 1879 residues: Protein TIC 214 (1879 aa).

A run of 6 helical transmembrane segments spans residues 18–38 (IINS…FSIG), 64–84 (FITG…HLAL), 87–107 (PYTI…WTNP), 124–144 (LSIQ…HFIL), 172–192 (VGWL…LVWI), and 218–238 (IAPI…GRIP). 2 disordered regions span residues 245-305 (ETSK…IDET) and 586-702 (ISTS…DEPM). 2 stretches are compositionally biased toward acidic residues: residues 253-268 (AETE…EIET) and 295-305 (EKEDPDKIDET). Positions 586–688 (ISTSTPTSTP…SIPASTSTST (103 aa)) are enriched in low complexity. Over residues 691 to 701 (IKSKDEPKDEP) the composition is skewed to basic and acidic residues.

Belongs to the TIC214 family. Part of the Tic complex.

It is found in the plastid. It localises to the chloroplast inner membrane. Its function is as follows. Involved in protein precursor import into chloroplasts. May be part of an intermediate translocation complex acting as a protein-conducting channel at the inner envelope. The polypeptide is Protein TIC 214 (Cucumis sativus (Cucumber)).